A 195-amino-acid chain; its full sequence is Calcineurin B homologous protein 1 (195 aa).

Gly-2 carries the N-myristoyl glycine lipid modification. The Necessary for association with microtubule and interaction with GAPDH motif lies at 2-6 (GSRAS). 4 EF-hand domains span residues 26–61 (SQIT…AINP), 66–101 (IINA…KSKD), 110–145 (SRSN…MVGV), and 151–186 (QLGS…VDVE). Ca(2+)-binding residues include Asp-123, Asp-125, Asp-127, Lys-129, and Glu-134. The Nuclear export signal 1 motif lies at 138-147 (VLRMMVGVNI). Residues 143 to 185 (VGVNISDEQLGSIADRTIQEADQDGDSAISFTEFVKVLEKVDV) are necessary for nuclear export signal. Ca(2+) contacts are provided by Asp-164, Asp-166, Asp-168, and Glu-175. The short motif at 176-185 (FVKVLEKVDV) is the Nuclear export signal 2 element.

It belongs to the calcineurin regulatory subunit family. CHP subfamily. Monomer. Interacts with STK17B; the interaction occurs in a calcium-independent manner and induces the translocation of CHP1 from the Golgi to the nucleus. Interacts with GAPDH; the interaction is direct, occurs in a N-myristoylation-dependent manner and facilitates the ability of CHP1 to bind microtubules. Interacts with KIF1B (via the C-terminal end of the kinesin-motor domain); the interaction occurs in a calcium-dependent manner. Associates (via C-terminal domain) with microtubules; the association occurs with polymerized microtubules during the cell cycle in a myristoylation- and calcium-independent manner and is enhanced by GAPDH. Interacts with PPP3CA. Interacts with SLC9A1/NHE1 (via the C-terminal domain); the interaction occurs at the plasma membrane in a calcium-dependent manner and at a domain that is critical for growth factor stimulation of the exchanger. Interacts with SLC9A3; increases SLC9A3 trafficking and activity at the plasma membrane. Post-translationally, phosphorylated; decreased phosphorylation is associated with an increase in SLC9A1/NHE1 Na(+)/H(+) exchange activity. Phosphorylation occurs in serum-dependent manner. The phosphorylation state may regulate the binding to SLC9A1/NHE1. In terms of processing, both N-myristoylation and calcium-mediated conformational changes are essential for its function in exocytic traffic. N-myristoylation is required for its association with microtubules and interaction with GAPDH, but not for the constitutive association to membranes. Ubiquitously expressed. Has been found in fetal eye, lung, liver, muscle, heart, kidney, thymus and spleen.

It is found in the nucleus. It localises to the cytoplasm. The protein localises to the cytoskeleton. Its subcellular location is the endomembrane system. The protein resides in the endoplasmic reticulum-Golgi intermediate compartment. It is found in the endoplasmic reticulum. It localises to the cell membrane. The protein localises to the membrane. Functionally, calcium-binding protein involved in different processes such as regulation of vesicular trafficking, plasma membrane Na(+)/H(+) exchanger and gene transcription. Involved in the constitutive exocytic membrane traffic. Mediates the association between microtubules and membrane-bound organelles of the endoplasmic reticulum and Golgi apparatus and is also required for the targeting and fusion of transcytotic vesicles (TCV) with the plasma membrane. Functions as an integral cofactor in cell pH regulation by controlling plasma membrane-type Na(+)/H(+) exchange activity. Affects the pH sensitivity of SLC9A1/NHE1 by increasing its sensitivity at acidic pH. Required for the stabilization and localization of SLC9A1/NHE1 at the plasma membrane. Inhibits serum- and GTPase-stimulated Na(+)/H(+) exchange. Plays a role as an inhibitor of ribosomal RNA transcription by repressing the nucleolar UBF1 transcriptional activity. May sequester UBF1 in the nucleoplasm and limit its translocation to the nucleolus. Associates to the ribosomal gene promoter. Acts as a negative regulator of the calcineurin/NFAT signaling pathway. Inhibits NFAT nuclear translocation and transcriptional activity by suppressing the calcium-dependent calcineurin phosphatase activity. Also negatively regulates the kinase activity of the apoptosis-induced kinase STK17B. Inhibits both STK17B auto- and substrate-phosphorylations in a calcium-dependent manner. The protein is Calcineurin B homologous protein 1 (CHP1) of Homo sapiens (Human).